The chain runs to 209 residues: Thymidine kinase (209 aa).

ATP contacts are provided by residues 16-23 (GPMFAGKT) and 90-93 (DEAQ). E91 serves as the catalytic Proton acceptor.

It belongs to the thymidine kinase family. Homotetramer.

It is found in the cytoplasm. It catalyses the reaction thymidine + ATP = dTMP + ADP + H(+). This chain is Thymidine kinase, found in Onion yellows phytoplasma (strain OY-M).